The sequence spans 260 residues: UPF0246 protein Tola_0968 (260 aa).

Belongs to the UPF0246 family.

In Tolumonas auensis (strain DSM 9187 / NBRC 110442 / TA 4), this protein is UPF0246 protein Tola_0968.